Reading from the N-terminus, the 101-residue chain is NAD(P)H-quinone oxidoreductase subunit 4L, chloroplastic (101 aa).

3 helical membrane passes run 2-22 (MFEH…YGLI), 32-52 (MCLE…SDLF), and 61-81 (IFSI…LAIV).

Belongs to the complex I subunit 4L family. In terms of assembly, NDH is composed of at least 16 different subunits, 5 of which are encoded in the nucleus.

The protein localises to the plastid. It localises to the chloroplast thylakoid membrane. It carries out the reaction a plastoquinone + NADH + (n+1) H(+)(in) = a plastoquinol + NAD(+) + n H(+)(out). It catalyses the reaction a plastoquinone + NADPH + (n+1) H(+)(in) = a plastoquinol + NADP(+) + n H(+)(out). In terms of biological role, NDH shuttles electrons from NAD(P)H:plastoquinone, via FMN and iron-sulfur (Fe-S) centers, to quinones in the photosynthetic chain and possibly in a chloroplast respiratory chain. The immediate electron acceptor for the enzyme in this species is believed to be plastoquinone. Couples the redox reaction to proton translocation, and thus conserves the redox energy in a proton gradient. This Lemna minor (Common duckweed) protein is NAD(P)H-quinone oxidoreductase subunit 4L, chloroplastic.